A 412-amino-acid polypeptide reads, in one-letter code: Protein Mb3436c (412 aa).

N6-(pyridoxal phosphate)lysine is present on Lys-227.

Belongs to the DegT/DnrJ/EryC1 family.

This is Protein Mb3436c from Mycobacterium bovis (strain ATCC BAA-935 / AF2122/97).